The following is a 98-amino-acid chain: NADH-ubiquinone oxidoreductase chain 4L (98 aa).

3 helical membrane-spanning segments follow: residues 1-21, 29-49, and 58-78; these read MPII…GMLI, SLLC…LMAL, and IVPI…LALL.

It belongs to the complex I subunit 4L family. In terms of assembly, core subunit of respiratory chain NADH dehydrogenase (Complex I) which is composed of 45 different subunits.

The protein localises to the mitochondrion inner membrane. It catalyses the reaction a ubiquinone + NADH + 5 H(+)(in) = a ubiquinol + NAD(+) + 4 H(+)(out). In terms of biological role, core subunit of the mitochondrial membrane respiratory chain NADH dehydrogenase (Complex I) which catalyzes electron transfer from NADH through the respiratory chain, using ubiquinone as an electron acceptor. Part of the enzyme membrane arm which is embedded in the lipid bilayer and involved in proton translocation. This chain is NADH-ubiquinone oxidoreductase chain 4L (MT-ND4L), found in Colobus guereza (Mantled guereza).